The primary structure comprises 314 residues: Vomeronasal type-1 receptor 98 (314 aa).

At 1 to 19 the chain is on the extracellular side; it reads MNKDTTMYCSAYIRDVFFC. The chain crosses the membrane as a helical span at residues 20 to 40; sequence EIGVGISANSCLLLFHIFMFI. The Cytoplasmic segment spans residues 41-49; the sequence is RGHRPRLTD. A helical membrane pass occupies residues 50–70; that stretch reads LPIGLMALIHLLMLLLAAYIA. The Extracellular segment spans residues 71 to 92; it reads KDFFMSSGWDDITCKLFIFLHR. A disulfide bridge links Cys84 with Cys171. Residues 93 to 113 traverse the membrane as a helical segment; it reads FFRSLSVCATCMLSVFQTIIL. Residues 114–133 are Cytoplasmic-facing; the sequence is CPQSSHLAKFKPNSPYHLSC. A helical transmembrane segment spans residues 134-154; that stretch reads FFIFMSIFYTSISSHILIAAI. Topologically, residues 155–186 are extracellular; that stretch reads ATQNLTSVNLIYITKSCSFLPMSSSMQRTFST. An N-linked (GlcNAc...) asparagine glycan is attached at Asn158. A helical membrane pass occupies residues 187-207; that stretch reads LLAFRNAFLIGLMGLSTCYMA. At 208 to 235 the chain is on the cytoplasmic side; that stretch reads TLLCRHKTRSQRLQNSKLSPKATPEQRA. A helical membrane pass occupies residues 236–256; that stretch reads IWTLLMFMSFFLVMSTFDSII. The Extracellular segment spans residues 257–268; sequence SYSRTIFQGNPS. Residues 269 to 289 traverse the membrane as a helical segment; it reads LYCAQILVAHSYAVVSPMLVL. The Cytoplasmic segment spans residues 290 to 314; sequence SNENRLTNPLISMYERIVRLDFLCW.

The protein belongs to the G-protein coupled receptor 1 family.

It is found in the cell membrane. Its function is as follows. Putative pheromone receptor implicated in the regulation of social as well as reproductive behavior. In Rattus norvegicus (Rat), this protein is Vomeronasal type-1 receptor 98 (Vom1r98).